A 511-amino-acid polypeptide reads, in one-letter code: Cobyric acid synthase (511 aa).

The 193-residue stretch at 251–443 (LLDIAIICLP…IHGIFDNDVF (193 aa)) folds into the GATase cobBQ-type domain. The active-site Nucleophile is cysteine 332. Residue histidine 435 is part of the active site.

Belongs to the CobB/CobQ family. CobQ subfamily.

The protein operates within cofactor biosynthesis; adenosylcobalamin biosynthesis. Catalyzes amidations at positions B, D, E, and G on adenosylcobyrinic A,C-diamide. NH(2) groups are provided by glutamine, and one molecule of ATP is hydrogenolyzed for each amidation. The polypeptide is Cobyric acid synthase (Listeria monocytogenes serotype 4a (strain HCC23)).